Reading from the N-terminus, the 85-residue chain is UPF0297 protein CHY_0540 (85 aa).

This sequence belongs to the UPF0297 family.

The chain is UPF0297 protein CHY_0540 from Carboxydothermus hydrogenoformans (strain ATCC BAA-161 / DSM 6008 / Z-2901).